The chain runs to 445 residues: Phosphoglucosamine mutase (445 aa).

S102 acts as the Phosphoserine intermediate in catalysis. Positions 102, 241, 243, and 245 each coordinate Mg(2+). S102 is subject to Phosphoserine.

This sequence belongs to the phosphohexose mutase family. Requires Mg(2+) as cofactor. Activated by phosphorylation.

The enzyme catalyses alpha-D-glucosamine 1-phosphate = D-glucosamine 6-phosphate. Functionally, catalyzes the conversion of glucosamine-6-phosphate to glucosamine-1-phosphate. This Rhodococcus jostii (strain RHA1) protein is Phosphoglucosamine mutase.